We begin with the raw amino-acid sequence, 514 residues long: Carboxysome shell carbonic anhydrase (514 aa).

A disordered region spans residues 1–27; the sequence is MAYRNRNLASQTQRPLAPTAPRRRPVV. Cysteine 175 is a binding site for Zn(2+). Aspartate 177 (proton acceptor) is an active-site residue. Zn(2+) contacts are provided by histidine 243 and cysteine 254.

It belongs to the beta-class carbonic anhydrase family. CsoSCA subfamily. Homodimer. Zn(2+) serves as cofactor.

Its subcellular location is the carboxysome. The enzyme catalyses hydrogencarbonate + H(+) = CO2 + H2O. Its function is as follows. Reversible hydration of carbon dioxide. Essential for photosynthetic carbon dioxide fixation, supplies CO(2) to RuBisCO (ribulose bisphosphate carboxylase, cbbL-cbbS) in the carboxysome. The polypeptide is Carboxysome shell carbonic anhydrase (Prochlorococcus marinus (strain MIT 9313)).